A 187-amino-acid chain; its full sequence is Dihydrofolate reductase (187 aa).

One can recognise a DHFR domain in the interval 4-185 (PLNCIVAVSQ…IKYKFEVYEK (182 aa)). The involved in methotrexate binding stretch occupies residues 8–37 (IVAVSQNMGIGKNGDFPWPMLRNEFKYFQR). Residues Ala-10 and 16–22 (GIGKNGD) contribute to the NADP(+) site. Residue 31-36 (EFKYFQ) coordinates substrate. An N6-acetyllysine; alternate modification is found at Lys-33. Lys-33 is subject to N6-succinyllysine; alternate. NADP(+) is bound at residue 55–57 (RKT). Positions 60–70 (SIPEKNRPLKD) are involved in methotrexate binding. Arg-71 is a substrate binding site. NADP(+) contacts are provided by residues 77-79 (SRE) and 117-124 (GGSSVYKE). Thr-137 is a binding site for methotrexate.

Belongs to the dihydrofolate reductase family. In terms of assembly, homodimer.

Its subcellular location is the mitochondrion. The protein resides in the cytoplasm. The enzyme catalyses (6S)-5,6,7,8-tetrahydrofolate + NADP(+) = 7,8-dihydrofolate + NADPH + H(+). Its pathway is cofactor biosynthesis; tetrahydrofolate biosynthesis; 5,6,7,8-tetrahydrofolate from 7,8-dihydrofolate: step 1/1. Its function is as follows. Key enzyme in folate metabolism. Contributes to the de novo mitochondrial thymidylate biosynthesis pathway. Catalyzes an essential reaction for de novo glycine and purine synthesis, and for DNA precursor synthesis. Binds its own mRNA. This Mesocricetus auratus (Golden hamster) protein is Dihydrofolate reductase (DHFR).